The chain runs to 295 residues: Glutamyl-Q tRNA(Asp) synthetase (295 aa).

Residues 9-13 (RFAPT) and glutamate 45 contribute to the L-glutamate site. Positions 12-22 (PTPSGYLHFGS) match the 'HIGH' region motif. Zn(2+) is bound by residues cysteine 101, cysteine 103, tyrosine 115, and cysteine 119. Tyrosine 172 and arginine 190 together coordinate L-glutamate. Residues 228 to 232 (KLGKS) carry the 'KMSKS' region motif. ATP is bound at residue lysine 231.

This sequence belongs to the class-I aminoacyl-tRNA synthetase family. GluQ subfamily. Zn(2+) is required as a cofactor.

Catalyzes the tRNA-independent activation of glutamate in presence of ATP and the subsequent transfer of glutamate onto a tRNA(Asp). Glutamate is transferred on the 2-amino-5-(4,5-dihydroxy-2-cyclopenten-1-yl) moiety of the queuosine in the wobble position of the QUC anticodon. This is Glutamyl-Q tRNA(Asp) synthetase from Pseudomonas syringae pv. tomato (strain ATCC BAA-871 / DC3000).